Consider the following 275-residue polypeptide: Large ribosomal subunit protein uL2 (275 aa).

Basic and acidic residues predominate over residues 28 to 38 (RPYEPLVETKS). 2 disordered regions span residues 28 to 53 (RPYE…TTRH) and 222 to 275 (GVAM…RSAK). The span at 254-275 (KGHKTRKNKRTDKMIVRRRSAK) shows a compositional bias: basic residues.

It belongs to the universal ribosomal protein uL2 family. As to quaternary structure, part of the 50S ribosomal subunit. Forms a bridge to the 30S subunit in the 70S ribosome.

One of the primary rRNA binding proteins. Required for association of the 30S and 50S subunits to form the 70S ribosome, for tRNA binding and peptide bond formation. It has been suggested to have peptidyltransferase activity; this is somewhat controversial. Makes several contacts with the 16S rRNA in the 70S ribosome. The chain is Large ribosomal subunit protein uL2 from Marinobacter nauticus (strain ATCC 700491 / DSM 11845 / VT8) (Marinobacter aquaeolei).